Here is a 447-residue protein sequence, read N- to C-terminus: Tubulin beta-1 chain (447 aa).

Residues Gln-11, Glu-69, Ser-138, Gly-142, Thr-143, Gly-144, Asn-204, and Asn-226 each contribute to the GTP site. A Mg(2+)-binding site is contributed by Glu-69.

It belongs to the tubulin family. In terms of assembly, dimer of alpha and beta chains. A typical microtubule is a hollow water-filled tube with an outer diameter of 25 nm and an inner diameter of 15 nM. Alpha-beta heterodimers associate head-to-tail to form protofilaments running lengthwise along the microtubule wall with the beta-tubulin subunit facing the microtubule plus end conferring a structural polarity. Microtubules usually have 13 protofilaments but different protofilament numbers can be found in some organisms and specialized cells. Requires Mg(2+) as cofactor.

The protein resides in the cytoplasm. It is found in the cytoskeleton. Its function is as follows. Tubulin is the major constituent of microtubules, a cylinder consisting of laterally associated linear protofilaments composed of alpha- and beta-tubulin heterodimers. Microtubules grow by the addition of GTP-tubulin dimers to the microtubule end, where a stabilizing cap forms. Below the cap, tubulin dimers are in GDP-bound state, owing to GTPase activity of alpha-tubulin. The sequence is that of Tubulin beta-1 chain from Geotrichum candidum (Oospora lactis).